The following is a 120-amino-acid chain: Large ribosomal subunit protein uL18 (120 aa).

This sequence belongs to the universal ribosomal protein uL18 family. Part of the 50S ribosomal subunit; part of the 5S rRNA/L5/L18/L25 subcomplex. Contacts the 5S and 23S rRNAs.

In terms of biological role, this is one of the proteins that bind and probably mediate the attachment of the 5S RNA into the large ribosomal subunit, where it forms part of the central protuberance. The polypeptide is Large ribosomal subunit protein uL18 (Bordetella bronchiseptica (strain ATCC BAA-588 / NCTC 13252 / RB50) (Alcaligenes bronchisepticus)).